The sequence spans 727 residues: Cyclin-T1 (727 aa).

S117 is subject to Phosphoserine. The short motif at 253 to 270 is the Nuclear localization signal, and interaction with Tat-TAR RNA element; the sequence is KRIRNWRACQAAKKTKAD. Low complexity predominate over residues 302–322; sequence MSTSSTTSTVPSLPTTEESSS. The segment at 302–326 is disordered; the sequence is MSTSSTTSTVPSLPTTEESSSNLSG. A Glycyl lysine isopeptide (Lys-Gly) (interchain with G-Cter in SUMO2) cross-link involves residue K343. Positions 386-427 form a coiled coil; sequence SAKVSLKEYRAKHAEELAAQKRQLENMEANVKSQYAYAAQNL. S390 carries the phosphoserine modification. K392 carries the N6-acetyllysine modification. A Glycyl lysine isopeptide (Lys-Gly) (interchain with G-Cter in SUMO2) cross-link involves residue K417. ADP-ribosylserine occurs at positions 418, 476, and 477. The segment at 482–552 is histidine-rich domain (HRD); sequence IKMRIKVHAA…RPGDPKHSSQ (71 aa). K483 is covalently cross-linked (Glycyl lysine isopeptide (Lys-Gly) (interchain with G-Cter in SUMO2)). The segment covering 486–508 has biased composition (basic and acidic residues); it reads IKVHAAPDKHNSIDDSVTKSREH. Disordered regions lie at residues 486-591 and 692-727; these read IKVH…DHPA and LNPR…PLPK. The residue at position 487 (K487) is an N6-(ADP-ribosyl)lysine. ADP-ribosylhistidine is present on H489. Residues S497 and S501 each carry the phosphoserine modification. A compositionally biased stretch (basic residues) spans 509–532; that stretch reads KEKHKTHPSNHHHHHNHHSHKHSH. The residue at position 532 (H532) is an ADP-ribosylhistidine. Residues S533, S551, and S554 each carry the ADP-ribosylserine modification. H558 carries the post-translational modification ADP-ribosylhistidine. The span at 562–572 shows a compositional bias: low complexity; it reads SLSSSFSSSSS. S565 bears the ADP-ribosylserine mark. Position 566 is a phosphoserine (S566). Residues 711–727 are compositionally biased toward pro residues; that stretch reads LPPLPSEPPPPLPPLPK.

The protein belongs to the cyclin family. Cyclin C subfamily. Cyclin-T1 is the predominant cyclin that associates with CDK9 to form a heterodimer called P-TEFb. P-TEFb forms a complex with AFF4/AF5Q31. Component of a complex which is at least composed of HTATSF1/Tat-SF1, P-TEFb complex, RNA pol II, SUPT5H, and NCL/nucleolin. Component of the 7SK snRNP complex at least composed of P-TEFb (composed of CDK9 and CCNT1/cyclin-T1), HEXIM1, HEXIM2, BCDIN3, SART3 proteins and 7SK and U6 snRNAs. Interacts (via central region) with ZMYND8 (via N-terminus); the interaction is direct and the association appears to occur between homodimeric ZMYND8 and the activated form of the P-TEFb complex. Interacts with BRD4, targets chromatin binding. Interacts with JMJD6. Interacts with MDFIC. Interacts with HSF1. Interacts with HTATSF1. Interacts with TBX21. ADP-ribosylation on serine residues by PARP1 in response to DNA damage disrupts the phase separation activity of CCNT1, thereby preventing activation of CDK9.

It localises to the nucleus. Functionally, regulatory subunit of the cyclin-dependent kinase pair (CDK9/cyclin-T1) complex, also called positive transcription elongation factor B (P-TEFb), which facilitates the transition from abortive to productive elongation by phosphorylating the CTD (C-terminal domain) of the large subunit of RNA polymerase II (RNA Pol II). Required to activate the protein kinase activity of CDK9: acts by mediating formation of liquid-liquid phase separation (LLPS) that enhances binding of P-TEFb to the CTD of RNA Pol II. In Equus caballus (Horse), this protein is Cyclin-T1 (CCNT1).